A 381-amino-acid polypeptide reads, in one-letter code: Alkanesulfonate monooxygenase (381 aa).

The protein belongs to the SsuD family. In terms of assembly, homotetramer.

It carries out the reaction an alkanesulfonate + FMNH2 + O2 = an aldehyde + FMN + sulfite + H2O + 2 H(+). Catalyzes the desulfonation of aliphatic sulfonates. The protein is Alkanesulfonate monooxygenase of Escherichia coli O7:K1 (strain IAI39 / ExPEC).